We begin with the raw amino-acid sequence, 906 residues long: Protein translocase subunit SecA (906 aa).

Residues Gln-86, 104 to 108, and Asp-511 contribute to the ATP site; that span reads GEGKT. Basic and acidic residues-rich tracts occupy residues 853–865 and 877–888; these read HESV…RHDE and VRREGPKVKRND. A disordered region spans residues 853 to 906; it reads HESVIDNNQRHDEDEQEEAPKVQQVRREGPKVKRNDPCPCGSGKKYKQCHGKVE. Zn(2+) contacts are provided by Cys-890, Cys-892, Cys-901, and His-902. The segment covering 896-906 has biased composition (basic residues); the sequence is KKYKQCHGKVE.

Belongs to the SecA family. Monomer and homodimer. Part of the essential Sec protein translocation apparatus which comprises SecA, SecYEG and auxiliary proteins SecDF-YajC and YidC. Zn(2+) serves as cofactor.

Its subcellular location is the cell inner membrane. It localises to the cytoplasm. It carries out the reaction ATP + H2O + cellular proteinSide 1 = ADP + phosphate + cellular proteinSide 2.. Functionally, part of the Sec protein translocase complex. Interacts with the SecYEG preprotein conducting channel. Has a central role in coupling the hydrolysis of ATP to the transfer of proteins into and across the cell membrane, serving both as a receptor for the preprotein-SecB complex and as an ATP-driven molecular motor driving the stepwise translocation of polypeptide chains across the membrane. The sequence is that of Protein translocase subunit SecA from Francisella tularensis subsp. holarctica (strain OSU18).